Consider the following 336-residue polypeptide: N-acetylornithine carbamoyltransferase (336 aa).

Residues 49 to 52 (SMRT), Trp-77, and Arg-112 each bind carbamoyl phosphate. Glu-144 provides a ligand contact to N(2)-acetyl-L-ornithine. 148 to 151 (HPCQ) provides a ligand contact to carbamoyl phosphate. N(2)-acetyl-L-ornithine contacts are provided by Lys-252 and Leu-295. Residue 294 to 295 (CL) coordinates carbamoyl phosphate. Position 302 is an N6-carboxylysine (Lys-302). Arg-322 provides a ligand contact to carbamoyl phosphate.

Belongs to the aspartate/ornithine carbamoyltransferase superfamily. AOTCase family. Homotrimer.

It localises to the cytoplasm. It catalyses the reaction N(2)-acetyl-L-ornithine + carbamoyl phosphate = N(2)-acetyl-L-citrulline + phosphate + H(+). It participates in amino-acid biosynthesis; L-arginine biosynthesis. Carboxylation at Lys-302 increases the catalytic activity of the enzyme. Its function is as follows. Catalyzes the transfer of the carbamoyl group from carbamoyl phosphate to the delta-amino group of N(2)-acetyl-L-ornithine to produce N(2)-acetyl-L-citrulline. This is a step in an alternative arginine biosynthesis pathway. The enzyme has no activity with ornithine. In Xylella fastidiosa (strain 9a5c), this protein is N-acetylornithine carbamoyltransferase.